The sequence spans 104 residues: MTEKWIDAVALYEIPEGDVLGVTVEGKELALYEVEGEIYATDNLCTHGAARMSDGFLEGREIECPLHQGRFDVCTGRALCAPVTQNIKTYPVKIEGQRVMIDLS.

The 96-residue stretch at 6–101 folds into the Rieske domain; that stretch reads IDAVALYEIP…VKIEGQRVMI (96 aa). 4 residues coordinate [2Fe-2S] cluster: Cys-45, His-47, Cys-64, and His-67.

The protein belongs to the bacterial ring-hydroxylating dioxygenase ferredoxin component family. The naphthalene dioxygenase (NDO) multicomponent enzyme system is composed of an electron transfer component and a dioxygenase component (iron sulfur protein (ISP)). The electron transfer component is composed of a ferredoxin reductase (NdoR) and a ferredoxin (NdoA), and the dioxygenase component is formed of a heterohexamer (trimer of heterodimers) of three large alpha subunits (NdoB) and three small beta subunits (NdoC). [2Fe-2S] cluster is required as a cofactor.

Its pathway is aromatic compound metabolism; naphthalene degradation. Functionally, component of the naphthalene dioxygenase (NDO) multicomponent enzyme system which catalyzes the incorporation of both atoms of molecular oxygen into naphthalene to form cis-(1R,2S)-dihydroxy-1,2-dihydronaphthalene. Functions as an intermediate electron transfer protein via a specific interaction with iron sulfur protein components (ISP) (NdoB and NdoC). This Pseudomonas aeruginosa protein is Naphthalene 1,2-dioxygenase system, ferredoxin component.